We begin with the raw amino-acid sequence, 171 residues long: Inosine/xanthosine triphosphatase (171 aa).

8-13 (TTNPAK) lines the substrate pocket. Glu38 is a Mg(2+) binding site.

The protein belongs to the YjjX NTPase family. Homodimer. The cofactor is Mg(2+). It depends on Mn(2+) as a cofactor.

It carries out the reaction XTP + H2O = XDP + phosphate + H(+). The catalysed reaction is ITP + H2O = IDP + phosphate + H(+). Functionally, phosphatase that hydrolyzes non-canonical purine nucleotides such as XTP and ITP to their respective diphosphate derivatives. Probably excludes non-canonical purines from DNA/RNA precursor pool, thus preventing their incorporation into DNA/RNA and avoiding chromosomal lesions. The protein is Inosine/xanthosine triphosphatase of Klebsiella pneumoniae (strain 342).